The primary structure comprises 220 residues: Large ribosomal subunit protein uL3 (220 aa).

The interval 61–81 is disordered; sequence KGSKSNKYANKPAEGHAKKAD.

It belongs to the universal ribosomal protein uL3 family. As to quaternary structure, part of the 50S ribosomal subunit. Forms a cluster with proteins L14 and L19.

Functionally, one of the primary rRNA binding proteins, it binds directly near the 3'-end of the 23S rRNA, where it nucleates assembly of the 50S subunit. This Staphylococcus epidermidis (strain ATCC 35984 / DSM 28319 / BCRC 17069 / CCUG 31568 / BM 3577 / RP62A) protein is Large ribosomal subunit protein uL3.